Here is a 350-residue protein sequence, read N- to C-terminus: Protein RecA (350 aa).

65–72 (GPESSGKT) serves as a coordination point for ATP.

Belongs to the RecA family.

The protein resides in the cytoplasm. Can catalyze the hydrolysis of ATP in the presence of single-stranded DNA, the ATP-dependent uptake of single-stranded DNA by duplex DNA, and the ATP-dependent hybridization of homologous single-stranded DNAs. It interacts with LexA causing its activation and leading to its autocatalytic cleavage. This is Protein RecA from Nautilia profundicola (strain ATCC BAA-1463 / DSM 18972 / AmH).